Reading from the N-terminus, the 320-residue chain is Cell division protein FtsQ (320 aa).

The segment at 1 to 24 is disordered; sequence MAQTIKRGGKGVRRATAARSAQRK. Residues 1–52 are Cytoplasmic-facing; it reads MAQTIKRGGKGVRRATAARSAQRKVQTARQQTGSVLDSVLRWLPFSEETLHR. A helical membrane pass occupies residues 53 to 73; the sequence is ILMTLILAAAAGLVWTVAVMA. The Periplasmic segment spans residues 74–320; sequence GIPALVSEQA…RAASAKSDEG (247 aa). The POTRA domain occupies 92-160; sequence FKVSHLEVRG…DTLVIDIVER (69 aa). The disordered stretch occupies residues 296-320; the sequence is AAEKRAEEQARAEAKRAASAKSDEG.

Belongs to the FtsQ/DivIB family. FtsQ subfamily.

The protein localises to the cell inner membrane. Functionally, essential cell division protein. The polypeptide is Cell division protein FtsQ (Novosphingobium aromaticivorans (strain ATCC 700278 / DSM 12444 / CCUG 56034 / CIP 105152 / NBRC 16084 / F199)).